We begin with the raw amino-acid sequence, 470 residues long: Dihydrolipoyl dehydrogenase (470 aa).

Residues 39–47, Lys56, and Ala119 each bind FAD; that span reads EKATLGGVC. A disulfide bridge links Cys47 with Cys52. NAD(+) is bound by residues 183–187, Glu206, and 272–275; these read GGGYI and TVGR. FAD is bound by residues Asp315 and Ala323. His447 (proton acceptor) is an active-site residue.

It belongs to the class-I pyridine nucleotide-disulfide oxidoreductase family. In terms of assembly, homodimer. Component of two multienzyme complexes: pyruvate dehydrogenase complex and oxoglutarate dehydrogenase complex. FAD is required as a cofactor.

It localises to the cytoplasm. It catalyses the reaction N(6)-[(R)-dihydrolipoyl]-L-lysyl-[protein] + NAD(+) = N(6)-[(R)-lipoyl]-L-lysyl-[protein] + NADH + H(+). In terms of biological role, catalyzes the oxidation of dihydrolipoamide to lipoamide. The polypeptide is Dihydrolipoyl dehydrogenase (pdhD) (Bacillus subtilis (strain 168)).